Reading from the N-terminus, the 730-residue chain is Tubulin polyglutamylase ttll-5 (730 aa).

The 359-residue stretch at Arg-120–Ser-478 folds into the TTL domain. Residues Ser-278–Leu-281, Lys-291, and Asp-293 each bind ATP. The tract at residues Lys-594–Ser-618 is disordered. The segment covering Ser-600–Ser-618 has biased composition (low complexity).

The protein belongs to the tubulin--tyrosine ligase family. In terms of tissue distribution, expressed in body wall muscles. Not expressed in sensory neurons.

The catalysed reaction is L-glutamyl-[protein] + L-glutamate + ATP = gamma-L-glutamyl-L-glutamyl-[protein] + ADP + phosphate + H(+). Its function is as follows. Polyglutamylase which preferentially modifies alpha-tubulin. Involved in the side-chain initiation step of the polyglutamylation reaction rather than in the elongation step. Together with ttll-4 and ttll-11, required for male mating. Probably by regulating microtubule stability via the glutamylation of tubulin, negatively regulates axon regrowth after injury in PLM neurons. In Caenorhabditis elegans, this protein is Tubulin polyglutamylase ttll-5.